The following is a 551-amino-acid chain: uncharacterized protein (551 aa).

Transmembrane regions (helical) follow at residues Met1 to Ser21, Trp25 to Ser45, Gly99 to Asn119, Leu124 to Trp144, Phe266 to Tyr286, and Phe490 to Asp510.

Its subcellular location is the cell membrane. This is an uncharacterized protein from Haemophilus influenzae (strain ATCC 51907 / DSM 11121 / KW20 / Rd).